A 165-amino-acid polypeptide reads, in one-letter code: Putative glycine-rich cell wall structural protein 1 (165 aa).

An N-terminal signal peptide occupies residues 1 to 23; sequence MARKVIALAFLLLLTISLSKSNA. 2 R2; Tyr-rich repeats span residues 56 to 62 and 93 to 99; these read GYGYGYG. Residues 105 to 125 are disordered; that stretch reads AQGQGSGGGGGGGGGGGGGGS. One copy of the R2; Tyr-rich repeat lies at 132-138; that stretch reads GYGYGYG. The disordered stretch occupies residues 146 to 165; sequence GGGGGGGGGGGGSGYVGKHE.

The protein localises to the secreted. It localises to the cell wall. Its function is as follows. Responsible for plasticity of the cell wall. The sequence is that of Putative glycine-rich cell wall structural protein 1 (GRP-1) from Oryza sativa subsp. indica (Rice).